We begin with the raw amino-acid sequence, 552 residues long: Urocanate hydratase (552 aa).

NAD(+) contacts are provided by residues 49 to 50 (GG), Q127, 173 to 175 (GMG), D193, 239 to 240 (NA), 260 to 264 (QTSAH), 270 to 271 (YI), and Y319. The active site involves C407. G489 contacts NAD(+).

It belongs to the urocanase family. NAD(+) serves as cofactor.

The protein resides in the cytoplasm. The catalysed reaction is 4-imidazolone-5-propanoate = trans-urocanate + H2O. Its pathway is amino-acid degradation; L-histidine degradation into L-glutamate; N-formimidoyl-L-glutamate from L-histidine: step 2/3. In terms of biological role, catalyzes the conversion of urocanate to 4-imidazolone-5-propionate. The sequence is that of Urocanate hydratase from Bacillus cereus (strain G9842).